The following is a 2772-amino-acid chain: Protein DDB_G0276689 (2772 aa).

6 disordered regions span residues 50–82 (QQLK…NNNN), 371–415 (NLET…NGKS), 475–514 (LDIN…KNNL), 612–650 (NKNN…NNNE), 685–708 (LRGS…DSSL), and 933–982 (LVNN…NNSN). Low complexity-rich tracts occupy residues 376 to 412 (NNNN…NNNN), 478 to 514 (NSKN…KNNL), 614 to 649 (NNNN…NNNN), and 688 to 708 (SFSP…DSSL). The stretch at 1065–1089 (LSKWILNLDDNNYNHIPFMSLVLMP) is one LRR 1 repeat. The segment at 1282 to 1319 (NNNNIDNNNNNNNNNNNNNNNNNNNNNNNNNNNNNNNN) is disordered. 2 LRR repeats span residues 1393–1416 (LSNL…TPKN) and 1543–1567 (HKDV…SFSN). Over residues 1587–1619 (QNNNYNNNNYNNNYNNNNNNNNNNNNNNNNNNN) the composition is skewed to low complexity. The interval 1587–1622 (QNNNYNNNNYNNNYNNNNNNNNNNNNNNNNNNNIDN) is disordered. An LRR 4 repeat occupies 1899–1922 (LEELTKQEIGYQVLLVLPTDLQVE). Polar residues-rich tracts occupy residues 1999–2011 (YVSN…NDQI) and 2073–2083 (LNIVHSTSPNS). Disordered stretches follow at residues 1999–2021 (YVSN…KDKK), 2054–2083 (EISN…SPNS), and 2367–2386 (NNSS…NNNN). One copy of the LRR 5 repeat lies at 2414 to 2439 (TTIINNIEMDKNRLDEAIYYLKKYGN).

The chain is Protein DDB_G0276689 from Dictyostelium discoideum (Social amoeba).